We begin with the raw amino-acid sequence, 477 residues long: Probable ribonuclease FAU-1 (477 aa).

This sequence belongs to the FAU-1 family.

Functionally, probable RNase involved in rRNA stability through maturation and/or degradation of precursor rRNAs. Binds to RNA in loop regions with AU-rich sequences. This is Probable ribonuclease FAU-1 from Staphylothermus marinus (strain ATCC 43588 / DSM 3639 / JCM 9404 / F1).